The chain runs to 545 residues: Chaperonin GroEL (545 aa).

ATP-binding positions include 29–32 (TMGP), Lys50, 86–90 (DGTTT), Gly414, 477–479 (NAA), and Asp493.

This sequence belongs to the chaperonin (HSP60) family. As to quaternary structure, forms a cylinder of 14 subunits composed of two heptameric rings stacked back-to-back. Interacts with the co-chaperonin GroES.

Its subcellular location is the cytoplasm. The enzyme catalyses ATP + H2O + a folded polypeptide = ADP + phosphate + an unfolded polypeptide.. Its function is as follows. Together with its co-chaperonin GroES, plays an essential role in assisting protein folding. The GroEL-GroES system forms a nano-cage that allows encapsulation of the non-native substrate proteins and provides a physical environment optimized to promote and accelerate protein folding. The polypeptide is Chaperonin GroEL (Campylobacter fetus subsp. fetus (strain 82-40)).